We begin with the raw amino-acid sequence, 486 residues long: Probable cytosol aminopeptidase (486 aa).

It belongs to the peptidase M17 family. Mn(2+) is required as a cofactor.

It localises to the cytoplasm. It carries out the reaction Release of an N-terminal amino acid, Xaa-|-Yaa-, in which Xaa is preferably Leu, but may be other amino acids including Pro although not Arg or Lys, and Yaa may be Pro. Amino acid amides and methyl esters are also readily hydrolyzed, but rates on arylamides are exceedingly low.. It catalyses the reaction Release of an N-terminal amino acid, preferentially leucine, but not glutamic or aspartic acids.. In terms of biological role, presumably involved in the processing and regular turnover of intracellular proteins. Catalyzes the removal of unsubstituted N-terminal amino acids from various peptides. This chain is Probable cytosol aminopeptidase (pepA), found in Synechococcus elongatus (strain ATCC 33912 / PCC 7942 / FACHB-805) (Anacystis nidulans R2).